The primary structure comprises 467 residues: MYDTLPPELWVQIVDYSGEISLLLTNTSFFELFNLINIKTDIIEYVMENDLIDILKYLSLLKKLGHPIIVDKNILNIKTLNKYLIKNCGENQLEIVKFLVSLGADIRAGNDYAVGLSSQNGHLEVVKYLVNQGSDIRAENDYAVRWASGNGHLEVVKYLVSQGANIRADNDHAIGLASYYGYLEVVKYLVSQGADIRSDNDYAVRMASRNGHIEVVEYLVSQGANIRSDNDYAVRLASQNGHLEVVKYLVSQGADIKSDNDYAVRLASQNGHLEVVEYLVTQGTNIRVNNNYAVEWASKNGNLEVVKYLISQGADIIADNNFAVRWASRNGHLEVVKYLVSLGADIKSDNDYAVRWASGNGHLEVVKYLVSQGSDIRVENDYAVRWASRNGHFDVIKYLVSQGADIRSDNDYAVKWASENGHLEVVKFLVSLGADIKAEDDYAVRWASEKGHLEVVEYLVSQGAVLS.

ANK repeat units lie at residues 38–70, 79–108, 109–138, 140–168, 170–198, 199–228, 229–258, 260–288, 289–318, 320–348, 350–378, 379–408, 410–438, and 440–467; these read IKTD…PIIV, TLNK…DIRA, GNDY…DIRA, NDYA…NIRA, NDHA…DIRS, DNDY…NIRS, DNDY…DIKS, NDYA…NIRV, NNNY…DIIA, NNFA…DIKS, NDYA…DIRV, ENDY…DIRS, NDYA…DIKA, and DDYA…AVLS.

In Acanthamoeba polyphaga mimivirus (APMV), this protein is Putative ankyrin repeat protein R911.